Consider the following 221-residue polypeptide: DNA mismatch repair protein MutH (221 aa).

This sequence belongs to the MutH family.

It localises to the cytoplasm. Functionally, sequence-specific endonuclease that cleaves unmethylated GATC sequences. It is involved in DNA mismatch repair. This Vibrio cholerae serotype O1 (strain ATCC 39315 / El Tor Inaba N16961) protein is DNA mismatch repair protein MutH.